Reading from the N-terminus, the 441-residue chain is Protein eva-1 homolog C (441 aa).

The segment at 1–23 is disordered; the sequence is MLLPGPARQPPTPQPVQHPGLRR. The signal sequence occupies residues 1–48; it reads MLLPGPARQPPTPQPVQHPGLRRQVEPPGQLLRLFYCTVLVCSKEISA. The segment covering 7–16 has biased composition (pro residues); the sequence is ARQPPTPQPV. At 49 to 322 the chain is on the extracellular side; sequence LTDFSGYLTK…AYIRAHPERA (274 aa). Asn-62 carries an N-linked (GlcNAc...) asparagine glycan. The SUEL-type lectin 1 domain maps to 67–159; sequence ACDGDYLNLQ…KYLLVSFKCQ (93 aa). A glycan (N-linked (GlcNAc...) asparagine) is linked at Asn-165. The SUEL-type lectin 2 domain occupies 168–260; sequence VCEDQELKLH…KYLTVTYACV (93 aa). A helical transmembrane segment spans residues 323–343; the sequence is ALLFVSSVCIGLALTLCALVI. At 344–441 the chain is on the cytoplasmic side; the sequence is RESCAKDFRD…SLPRNMGQFY (98 aa). Positions 362–391 are disordered; that stretch reads VPGSDKVEEDSEDEEEEEDSSESDFPGELS. Over residues 368 to 383 the composition is skewed to acidic residues; it reads VEEDSEDEEEEEDSSE.

This sequence belongs to the EVA1 family.

It localises to the cell membrane. Its function is as follows. Binds heparin. The sequence is that of Protein eva-1 homolog C (EVA1C) from Pan troglodytes (Chimpanzee).